The following is a 327-amino-acid chain: MDKVFDYEDIQLIPAKCIVDSRSECDPTVELGGFTFRLPVVPANMQTIIDEKVALMLAKNGYFYIMHRFNPETRLAFIQDMHERGLYASISVGVKDEEYGFIEVLKSTGHTPEFITIDIAHGHSNAVIRMIQHIKHHLPGSFVIAGNVGTPEAVRELEHAGADATKVGIGPGKVCITKIKTGFGTGGWQLAALRWCAKAATKPIIADGGIRTHGDIAKSIRFGASMVMIGSLFAGHDESPGETFEQDGKQLKEYFGSASEFQKGERKNVEGKKMFVEHKGALQDTLTEMEQDLQSAISYAGGDSLEALRTVDYVMVKNSIFNGDKVY.

The Thioimidate intermediate role is filled by Cys175. 204–227 (IIADGGIRTHGDIAKSIRFGASMV) contributes to the NADP(+) binding site.

This sequence belongs to the IMPDH/GMPR family. GuaC type 2 subfamily.

The catalysed reaction is IMP + NH4(+) + NADP(+) = GMP + NADPH + 2 H(+). Catalyzes the irreversible NADPH-dependent deamination of GMP to IMP. It functions in the conversion of nucleobase, nucleoside and nucleotide derivatives of G to A nucleotides, and in maintaining the intracellular balance of A and G nucleotides. The protein is GMP reductase of Exiguobacterium sp. (strain ATCC BAA-1283 / AT1b).